Reading from the N-terminus, the 329-residue chain is GTP 3',8-cyclase (329 aa).

The Radical SAM core domain occupies 8-234 (AFARKFYYLR…QLRQRSDGPA (227 aa)). Arg-17 contacts GTP. 2 residues coordinate [4Fe-4S] cluster: Cys-24 and Cys-28. Tyr-30 provides a ligand contact to S-adenosyl-L-methionine. Cys-31 is a [4Fe-4S] cluster binding site. Arg-68 provides a ligand contact to GTP. Gly-72 contributes to the S-adenosyl-L-methionine binding site. Thr-99 provides a ligand contact to GTP. Ser-123 serves as a coordination point for S-adenosyl-L-methionine. GTP is bound at residue Lys-160. Residue Met-194 participates in S-adenosyl-L-methionine binding. Cys-257 and Cys-260 together coordinate [4Fe-4S] cluster. 262 to 264 (RLR) provides a ligand contact to GTP. Cys-274 lines the [4Fe-4S] cluster pocket.

This sequence belongs to the radical SAM superfamily. MoaA family. In terms of assembly, monomer and homodimer. [4Fe-4S] cluster is required as a cofactor.

It carries out the reaction GTP + AH2 + S-adenosyl-L-methionine = (8S)-3',8-cyclo-7,8-dihydroguanosine 5'-triphosphate + 5'-deoxyadenosine + L-methionine + A + H(+). It functions in the pathway cofactor biosynthesis; molybdopterin biosynthesis. Its function is as follows. Catalyzes the cyclization of GTP to (8S)-3',8-cyclo-7,8-dihydroguanosine 5'-triphosphate. This Salmonella paratyphi B (strain ATCC BAA-1250 / SPB7) protein is GTP 3',8-cyclase.